Reading from the N-terminus, the 587-residue chain is 2-succinyl-5-enolpyruvyl-6-hydroxy-3-cyclohexene-1-carboxylate synthase (587 aa).

Belongs to the TPP enzyme family. MenD subfamily. As to quaternary structure, homodimer. Mg(2+) serves as cofactor. Mn(2+) is required as a cofactor. The cofactor is thiamine diphosphate.

The enzyme catalyses isochorismate + 2-oxoglutarate + H(+) = 5-enolpyruvoyl-6-hydroxy-2-succinyl-cyclohex-3-ene-1-carboxylate + CO2. It functions in the pathway quinol/quinone metabolism; 1,4-dihydroxy-2-naphthoate biosynthesis; 1,4-dihydroxy-2-naphthoate from chorismate: step 2/7. Its pathway is quinol/quinone metabolism; menaquinone biosynthesis. In terms of biological role, catalyzes the thiamine diphosphate-dependent decarboxylation of 2-oxoglutarate and the subsequent addition of the resulting succinic semialdehyde-thiamine pyrophosphate anion to isochorismate to yield 2-succinyl-5-enolpyruvyl-6-hydroxy-3-cyclohexene-1-carboxylate (SEPHCHC). The sequence is that of 2-succinyl-5-enolpyruvyl-6-hydroxy-3-cyclohexene-1-carboxylate synthase from Chloroflexus aurantiacus (strain ATCC 29366 / DSM 635 / J-10-fl).